The following is a 650-amino-acid chain: DNA mismatch repair protein MutL (650 aa).

A disordered region spans residues 374 to 420; the sequence is SSLPDTQRSQRQPEKAASGQRSSVDAGLSQGSSAHRASQTGLGQSGN. Residues 392-420 show a composition bias toward polar residues; sequence GQRSSVDAGLSQGSSAHRASQTGLGQSGN.

Belongs to the DNA mismatch repair MutL/HexB family.

Its function is as follows. This protein is involved in the repair of mismatches in DNA. It is required for dam-dependent methyl-directed DNA mismatch repair. May act as a 'molecular matchmaker', a protein that promotes the formation of a stable complex between two or more DNA-binding proteins in an ATP-dependent manner without itself being part of a final effector complex. This Shewanella amazonensis (strain ATCC BAA-1098 / SB2B) protein is DNA mismatch repair protein MutL.